Reading from the N-terminus, the 470-residue chain is Uronate isomerase (470 aa).

The protein belongs to the metallo-dependent hydrolases superfamily. Uronate isomerase family.

It catalyses the reaction D-glucuronate = D-fructuronate. It carries out the reaction aldehydo-D-galacturonate = keto-D-tagaturonate. It participates in carbohydrate metabolism; pentose and glucuronate interconversion. The protein is Uronate isomerase of Vibrio parahaemolyticus serotype O3:K6 (strain RIMD 2210633).